The following is a 199-amino-acid chain: Acireductone dioxygenase 1 (199 aa).

Fe(2+) contacts are provided by His99, His101, Glu105, and His144. Ni(2+)-binding residues include His99, His101, Glu105, and His144.

It belongs to the acireductone dioxygenase (ARD) family. The cofactor is Fe(2+). Ni(2+) is required as a cofactor.

The protein localises to the cytoplasm. It is found in the nucleus. It catalyses the reaction 1,2-dihydroxy-5-(methylsulfanyl)pent-1-en-3-one + O2 = 4-methylsulfanyl-2-oxobutanoate + formate + 2 H(+). The catalysed reaction is 1,2-dihydroxy-5-(methylsulfanyl)pent-1-en-3-one + O2 = 3-(methylsulfanyl)propanoate + CO + formate + 2 H(+). The protein operates within amino-acid biosynthesis; L-methionine biosynthesis via salvage pathway; L-methionine from S-methyl-5-thio-alpha-D-ribose 1-phosphate: step 5/6. Catalyzes 2 different reactions between oxygen and the acireductone 1,2-dihydroxy-3-keto-5-methylthiopentene (DHK-MTPene) depending upon the metal bound in the active site. Fe-containing acireductone dioxygenase (Fe-ARD) produces formate and 2-keto-4-methylthiobutyrate (KMTB), the alpha-ketoacid precursor of methionine in the methionine recycle pathway. Ni-containing acireductone dioxygenase (Ni-ARD) produces methylthiopropionate, carbon monoxide and formate, and does not lie on the methionine recycle pathway. The protein is Acireductone dioxygenase 1 (ARD1) of Arabidopsis thaliana (Mouse-ear cress).